We begin with the raw amino-acid sequence, 2295 residues long: Protein DOP1B (2295 aa).

Phosphoserine occurs at positions 556 and 597. 4 disordered regions span residues 574 to 599 (AGDE…SSPE), 651 to 684 (GEEN…DPKP), 1034 to 1059 (CKEA…QFTT), and 1092 to 1136 (DLPD…LQDL). A compositionally biased stretch (polar residues) spans 1111 to 1131 (ADTSSGHTDSENTSTFSSPSH). Serine 1167 is modified (phosphoserine).

The protein belongs to the DOP1 family. Homooligomer. Heterotrimer with ATP9A and MON2; this interaction is retromer-independent. Interacts with SNX3. Expressed in liver, heart and brain.

Its subcellular location is the early endosome membrane. It is found in the golgi apparatus membrane. May play a role in regulating membrane trafficking of cargo proteins. Together with ATP9A and MON2, regulates SNX3 retromer-mediated endosomal sorting of WLS away from lysosomal degradation. The polypeptide is Protein DOP1B (Dop1b) (Mus musculus (Mouse)).